The following is a 442-amino-acid chain: Citrate synthase (442 aa).

Residues histidine 274, histidine 320, and aspartate 375 contribute to the active site.

Belongs to the citrate synthase family.

The catalysed reaction is oxaloacetate + acetyl-CoA + H2O = citrate + CoA + H(+). It participates in carbohydrate metabolism; tricarboxylic acid cycle; isocitrate from oxaloacetate: step 1/2. In terms of biological role, catalyzes both citrate generation and citrate cleavage. Part of a reversible tricarboxylic acid (TCA) cycle that can fix carbon dioxide autotrophically and may represent an ancestral mode of the conventional reductive TCA (rTCA) cycle. The direction is controlled by the available carbon source(s). The protein is Citrate synthase of Thermosulfidibacter takaii (strain DSM 17441 / JCM 13301 / NBRC 103674 / ABI70S6).